Reading from the N-terminus, the 123-residue chain is Large ribosomal subunit protein bL20 (123 aa).

This sequence belongs to the bacterial ribosomal protein bL20 family.

Binds directly to 23S ribosomal RNA and is necessary for the in vitro assembly process of the 50S ribosomal subunit. It is not involved in the protein synthesizing functions of that subunit. The polypeptide is Large ribosomal subunit protein bL20 (rplT) (Chlamydia trachomatis serovar D (strain ATCC VR-885 / DSM 19411 / UW-3/Cx)).